The following is a 91-amino-acid chain: Progonadoliberin-1 (91 aa).

Residues 1-21 (MVVKTWMPWLLVSSVLSQGCC) form the signal peptide. Gln-22 carries the pyrrolidone carboxylic acid modification. At Gly-31 the chain carries Glycine amide.

This sequence belongs to the GnRH family. As to expression, expressed in the cell bodies of a cluster of neurons in the preoptic region.

It is found in the secreted. In terms of biological role, stimulates the secretion of gonadotropins. The sequence is that of Progonadoliberin-1 (gnrh1) from Oryzias latipes (Japanese rice fish).